The chain runs to 657 residues: Pentatricopeptide repeat-containing protein At5g44230 (657 aa).

PPR repeat units lie at residues 45–79 (KELLVSSLISKLDDCINLNQIKQIHGHVLRKGLDQ), 80–112 (SCYILTKLIRTLTKLGVPMDPYARRVIEPVQFR), 113–147 (NPFLWTAVIRGYAIEGKFDEAIAMYGCMRKEEITP), 148–178 (VSFTFSALLKACGTMKDLNLGRQFHAQTFRL), 183–213 (FVYVGNTMIDMYVKCESIDCARKVFDEMPER), 214–244 (DVISWTELIAAYARVGNMECAAELFESLPTK), 245–279 (DMVAWTAMVTGFAQNAKPQEALEYFDRMEKSGIRA), 280–314 (DEVTVAGYISACAQLGASKYADRAVQIAQKSGYSP), 317–347 (HVVIGSALIDMYSKCGNVEEAVNVFMSMNNK), 348–383 (NVFTYSSMILGLATHGRAQEALHLFHYMVTQTEIKP), 384–419 (NTVTFVGALMACSHSGLVDQGRQVFDSMYQTFGVQP), and 420–450 (TRDHYTCMVDLLGRTGRLQEALELIKTMSVE). The interval 455-530 (VWGALLGACR…TPAVSWVVDK (76 aa)) is type E motif. The tract at residues 532 to 562 (GQMHKFFPGNLNHPMSNKIQDKLEELVERLT) is type E(+) motif. Positions 563–657 (VLGYQPDLSS…SGDCSCGDFW (95 aa)) are type DYW motif.

The protein belongs to the PPR family. PCMP-H subfamily.

The sequence is that of Pentatricopeptide repeat-containing protein At5g44230 (PCMP-H17) from Arabidopsis thaliana (Mouse-ear cress).